The primary structure comprises 499 residues: MTIHIKNNVNWVGQRDWEVSDFHGTEFKMTKGTSYNSYLIQEEKTILIDTVDHRFSHQFIQNLEMEIDLTSIDYIVINHAEEDHAGALAALMEKIPGTPIYCTENAIDSIVGHHHHPEWNFKPIKTGDALDIGNGKQLVFVEAPMLHWPDSMMTYLTGDAILFSNDAFGQHYCDERLFNDEVDQTELMDQCLRYYANILTPFSALVTAKIKEVLSFNLPVDMIATSHGCVWRDNPTQIIHQYLEWADNYQEDRITLFYDSMSNNTRMMADAIAQGIHDVDPGVAVKVFNVSRQDKNDILTSVFRSKGILVGSSTMNNVMMPKIAGMLEEITGLRFRAKKAGAFGSYGWNGGAVDRIHSRLTDAGFETAVGLKAKWRPDGKAMQLCREHGQFIAKQWALKPVTTTFQTINVEKKTIPASIAEPVIMVDPSVSSTVESEISVIASNDDKQCMLCTVCNWVYDPEIGEPNQGVEPNTAWIDVPDYFLCPECNLGKDVFVEVK.

The interval 30–210 (TKGTSYNSYL…PFSALVTAKI (181 aa)) is zinc metallo-hydrolase. 6 residues coordinate Fe cation: histidine 79, glutamate 81, aspartate 83, histidine 147, aspartate 166, and histidine 227. The 140-residue stretch at 254-393 (ITLFYDSMSN…LCREHGQFIA (140 aa)) folds into the Flavodoxin-like domain. FMN-binding positions include 260 to 264 (SMSNN) and 342 to 369 (AFGS…ETAV). Positions 447–498 (KQCMLCTVCNWVYDPEIGEPNQGVEPNTAWIDVPDYFLCPECNLGKDVFVEV) constitute a Rubredoxin-like domain. Fe cation-binding residues include cysteine 452, cysteine 455, cysteine 485, and cysteine 488.

In the N-terminal section; belongs to the zinc metallo-hydrolase group 3 family. In terms of assembly, homotetramer. Requires Fe cation as cofactor. The cofactor is FMN.

It localises to the cytoplasm. Its pathway is nitrogen metabolism; nitric oxide reduction. In terms of biological role, anaerobic nitric oxide reductase; uses NADH to detoxify nitric oxide (NO), protecting several 4Fe-4S NO-sensitive enzymes. Has at least 2 reductase partners, only one of which (NorW, flavorubredoxin reductase) has been identified. NO probably binds to the di-iron center; electrons enter from the NorW at rubredoxin and are transferred sequentially to the FMN center and the di-iron center. Also able to function as an aerobic oxygen reductase. The chain is Anaerobic nitric oxide reductase flavorubredoxin from Aliivibrio salmonicida (strain LFI1238) (Vibrio salmonicida (strain LFI1238)).